The following is a 269-amino-acid chain: Tryptophan synthase alpha chain (269 aa).

Catalysis depends on proton acceptor residues E49 and D60.

The protein belongs to the TrpA family. As to quaternary structure, tetramer of two alpha and two beta chains.

The enzyme catalyses (1S,2R)-1-C-(indol-3-yl)glycerol 3-phosphate + L-serine = D-glyceraldehyde 3-phosphate + L-tryptophan + H2O. It participates in amino-acid biosynthesis; L-tryptophan biosynthesis; L-tryptophan from chorismate: step 5/5. The alpha subunit is responsible for the aldol cleavage of indoleglycerol phosphate to indole and glyceraldehyde 3-phosphate. The polypeptide is Tryptophan synthase alpha chain (Salmonella arizonae (strain ATCC BAA-731 / CDC346-86 / RSK2980)).